A 263-amino-acid chain; its full sequence is Putative steroid dehydrogenase 4 (263 aa).

Catalysis depends on tyrosine 154, which acts as the Proton acceptor.

It belongs to the short-chain dehydrogenases/reductases (SDR) family. 17-beta-HSD 3 subfamily.

In Caenorhabditis elegans, this protein is Putative steroid dehydrogenase 4 (stdh-4).